The following is a 266-amino-acid chain: Protein crossbronx-like (266 aa).

The 164-residue stretch at 15-178 (KQGYHILAEY…VQEQAIASRN (164 aa)) folds into the UBC core domain.

This sequence belongs to the ubiquitin-conjugating enzyme family. FTS subfamily.

The polypeptide is Protein crossbronx-like (Drosophila erecta (Fruit fly)).